A 189-amino-acid chain; its full sequence is Thermostable direct hemolysin-related (189 aa).

The N-terminal stretch at methionine 1–alanine 24 is a signal peptide. The cysteines at positions 175 and 185 are disulfide-linked.

This sequence belongs to the TDH hemolysin family. In terms of assembly, homodimer.

Bacterial hemolysins are exotoxins that attack blood cell membranes and cause cell rupture by mechanisms not clearly defined. This is Thermostable direct hemolysin-related (tdh3) from Vibrio parahaemolyticus.